Here is a 147-residue protein sequence, read N- to C-terminus: Nucleoside diphosphate kinase (147 aa).

Positions 9, 57, 85, 91, 102, and 112 each coordinate ATP. Histidine 115 acts as the Pros-phosphohistidine intermediate in catalysis.

The protein belongs to the NDK family. In terms of assembly, homotetramer. It depends on Mg(2+) as a cofactor.

Its subcellular location is the cytoplasm. The enzyme catalyses a 2'-deoxyribonucleoside 5'-diphosphate + ATP = a 2'-deoxyribonucleoside 5'-triphosphate + ADP. It carries out the reaction a ribonucleoside 5'-diphosphate + ATP = a ribonucleoside 5'-triphosphate + ADP. Major role in the synthesis of nucleoside triphosphates other than ATP. The ATP gamma phosphate is transferred to the NDP beta phosphate via a ping-pong mechanism, using a phosphorylated active-site intermediate. The protein is Nucleoside diphosphate kinase of Listeria monocytogenes serotype 4b (strain CLIP80459).